Here is a 132-residue protein sequence, read N- to C-terminus: Global transcriptional regulator Spx (132 aa).

Residues C10 and C13 are joined by a disulfide bond.

Belongs to the ArsC family. Spx subfamily. As to quaternary structure, interacts with the C-terminal domain of the alpha subunit of the RNAP.

It localises to the cytoplasm. Its function is as follows. Global transcriptional regulator that plays a key role in stress response and exerts either positive or negative regulation of genes. Acts by interacting with the C-terminal domain of the alpha subunit of the RNA polymerase (RNAP). This interaction can enhance binding of RNAP to the promoter region of target genes and stimulate their transcription, or block interaction of RNAP with activator. The sequence is that of Global transcriptional regulator Spx from Lactiplantibacillus plantarum (strain ATCC BAA-793 / NCIMB 8826 / WCFS1) (Lactobacillus plantarum).